A 257-amino-acid chain; its full sequence is UPF0246 protein Lcho_2652 (257 aa).

This sequence belongs to the UPF0246 family.

This is UPF0246 protein Lcho_2652 from Leptothrix cholodnii (strain ATCC 51168 / LMG 8142 / SP-6) (Leptothrix discophora (strain SP-6)).